The following is a 467-amino-acid chain: Asparagine--tRNA ligase (467 aa).

It belongs to the class-II aminoacyl-tRNA synthetase family. Homodimer.

It localises to the cytoplasm. It carries out the reaction tRNA(Asn) + L-asparagine + ATP = L-asparaginyl-tRNA(Asn) + AMP + diphosphate + H(+). The chain is Asparagine--tRNA ligase from Phocaeicola vulgatus (strain ATCC 8482 / DSM 1447 / JCM 5826 / CCUG 4940 / NBRC 14291 / NCTC 11154) (Bacteroides vulgatus).